Consider the following 492-residue polypeptide: Glutamyl-tRNA(Gln) amidotransferase subunit A (492 aa).

Residues K79 and S154 each act as charge relay system in the active site. Catalysis depends on S178, which acts as the Acyl-ester intermediate.

The protein belongs to the amidase family. GatA subfamily. In terms of assembly, heterotrimer of A, B and C subunits.

The enzyme catalyses L-glutamyl-tRNA(Gln) + L-glutamine + ATP + H2O = L-glutaminyl-tRNA(Gln) + L-glutamate + ADP + phosphate + H(+). Allows the formation of correctly charged Gln-tRNA(Gln) through the transamidation of misacylated Glu-tRNA(Gln) in organisms which lack glutaminyl-tRNA synthetase. The reaction takes place in the presence of glutamine and ATP through an activated gamma-phospho-Glu-tRNA(Gln). This chain is Glutamyl-tRNA(Gln) amidotransferase subunit A, found in Acinetobacter baumannii (strain ACICU).